The chain runs to 480 residues: Glutamate--tRNA ligase (480 aa).

Residues 21-31 (PSPTGYLHVGG) carry the 'HIGH' region motif. Zn(2+)-binding residues include Cys-110, Cys-112, Cys-137, and His-139. Positions 248 to 252 (KLSKR) match the 'KMSKS' region motif. Lys-251 lines the ATP pocket.

The protein belongs to the class-I aminoacyl-tRNA synthetase family. Glutamate--tRNA ligase type 1 subfamily. Monomer. Requires Zn(2+) as cofactor.

It is found in the cytoplasm. It catalyses the reaction tRNA(Glu) + L-glutamate + ATP = L-glutamyl-tRNA(Glu) + AMP + diphosphate. In terms of biological role, catalyzes the attachment of glutamate to tRNA(Glu) in a two-step reaction: glutamate is first activated by ATP to form Glu-AMP and then transferred to the acceptor end of tRNA(Glu). In Histophilus somni (strain 2336) (Haemophilus somnus), this protein is Glutamate--tRNA ligase.